Here is an 80-residue protein sequence, read N- to C-terminus: Conotoxin PnMKLT1-0121 (80 aa).

Positions 1-22 are cleaved as a signal peptide; it reads MKLTCMMIVAVLFLTAWTFATA. The propeptide occupies 23-49; sequence DDPRNRLENFFSKTQHEMKNPEASKLN. 3 disulfides stabilise this stretch: Cys-52-Cys-67, Cys-59-Cys-71, and Cys-66-Cys-75.

This sequence belongs to the conotoxin O1 superfamily. As to expression, expressed by the venom duct.

Its subcellular location is the secreted. The chain is Conotoxin PnMKLT1-0121 from Conus pennaceus (Feathered cone).